The chain runs to 301 residues: Rhodopsin (301 aa).

Residues 1–18 are Extracellular-facing; it reads LHMIHLHWYQYPPMNPMM. A helical transmembrane segment spans residues 19–43; it reads YPLLLIFMLFTGILCLAGNFVTIWV. The Cytoplasmic portion of the chain corresponds to 44-55; that stretch reads FMNTKSLRTPAN. A helical transmembrane segment spans residues 56 to 78; the sequence is LLVVNLAMSDFLMMFTMFPPMMV. The Extracellular segment spans residues 79–92; the sequence is TCYYHTWTLGPTFC. Cys-92 and Cys-169 form a disulfide bridge. The chain crosses the membrane as a helical span at residues 93–115; sequence QVYAFLGNLCGCASIWTMVFITF. The short motif at 116 to 118 is the 'Ionic lock' involved in activated form stabilization element; sequence DRY. The Cytoplasmic segment spans residues 116-134; the sequence is DRYNVIVKGVAGEPLSTKK. The helical transmembrane segment at 135–155 threads the bilayer; the sequence is ASLWILSVWVLSTAWCIAPFF. Topologically, residues 156–182 are extracellular; sequence GWNHYVPEGNLTGCGTDYLSEDILSRS. The N-linked (GlcNAc...) asparagine glycan is linked to Asn-165. A helical membrane pass occupies residues 183–204; it reads YLYIYSTWVYFLPLAITIYCYV. The Cytoplasmic segment spans residues 205-245; it reads FIIKAVAAHEKGMRDQAKKMGIKSLRNEEAQKTSAECRLAK. Residues 246–267 traverse the membrane as a helical segment; that stretch reads NAMTTVALWFIAWTPCLLINWV. The Extracellular segment spans residues 268 to 278; the sequence is GMFARSYLSPV. A helical transmembrane segment spans residues 279–300; that stretch reads YTIWGYVFAKANAVYNPIVYAI. At Lys-288 the chain carries N6-(retinylidene)lysine.

This sequence belongs to the G-protein coupled receptor 1 family. Opsin subfamily. Homodimer. Interacts with GNAQ. Post-translationally, contains one covalently linked retinal chromophore.

The protein localises to the cell projection. Its subcellular location is the rhabdomere membrane. Photoreceptor required for image-forming vision at low light intensity. Can use both retinal and 3-dehydroretinal as visual pigment. Light-induced isomerization of 11-cis to all-trans retinal triggers a conformational change that activates signaling via G-proteins. Signaling via GNAQ probably mediates the activation of phospholipase C. In Cambarus hubrichti (Salem cave crayfish), this protein is Rhodopsin (RHO).